The chain runs to 324 residues: NADH-ubiquinone oxidoreductase chain 1 (324 aa).

A run of 8 helical transmembrane segments spans residues 9–29, 75–95, 106–126, 146–166, 177–197, 228–248, 259–279, and 299–319; these read LINPLAYIVPVLLAVAFLTLI, FLFLAAPVLALTLAMTLWAPM, LGILFILALSSLAVYSILGSG, ISYEVSLGLILLSVIIFSGGY, SIWLLIPAWPLAAMWYISTLA, LFFLAEYANILLMNTLSAVLF, ELTTINLMTKAALLSIMFLWV, and FLPLTLAFVLWHTALPIALAG.

This sequence belongs to the complex I subunit 1 family.

It is found in the mitochondrion inner membrane. The enzyme catalyses a ubiquinone + NADH + 5 H(+)(in) = a ubiquinol + NAD(+) + 4 H(+)(out). Functionally, core subunit of the mitochondrial membrane respiratory chain NADH dehydrogenase (Complex I) that is believed to belong to the minimal assembly required for catalysis. Complex I functions in the transfer of electrons from NADH to the respiratory chain. The immediate electron acceptor for the enzyme is believed to be ubiquinone. The protein is NADH-ubiquinone oxidoreductase chain 1 (MT-ND1) of Cyprinus carpio (Common carp).